We begin with the raw amino-acid sequence, 418 residues long: Serine hydroxymethyltransferase (418 aa).

Residues L121 and 125–127 (GHL) contribute to the (6S)-5,6,7,8-tetrahydrofolate site. N6-(pyridoxal phosphate)lysine is present on K230. 355–357 (SPF) lines the (6S)-5,6,7,8-tetrahydrofolate pocket.

The protein belongs to the SHMT family. In terms of assembly, homodimer. It depends on pyridoxal 5'-phosphate as a cofactor.

It localises to the cytoplasm. The catalysed reaction is (6R)-5,10-methylene-5,6,7,8-tetrahydrofolate + glycine + H2O = (6S)-5,6,7,8-tetrahydrofolate + L-serine. It participates in one-carbon metabolism; tetrahydrofolate interconversion. The protein operates within amino-acid biosynthesis; glycine biosynthesis; glycine from L-serine: step 1/1. Catalyzes the reversible interconversion of serine and glycine with tetrahydrofolate (THF) serving as the one-carbon carrier. This reaction serves as the major source of one-carbon groups required for the biosynthesis of purines, thymidylate, methionine, and other important biomolecules. Also exhibits THF-independent aldolase activity toward beta-hydroxyamino acids, producing glycine and aldehydes, via a retro-aldol mechanism. In Streptococcus pyogenes serotype M5 (strain Manfredo), this protein is Serine hydroxymethyltransferase.